The following is a 460-amino-acid chain: Cell death abnormality protein 8 (460 aa).

The Cytoplasmic segment spans residues 1 to 45 (MYLKKHESKLLLIPKNEDKEDAGIIAVLTDRVPSVLIVRWFDLFC). The chain crosses the membrane as a helical span at residues 46-66 (FGFAMCSYVLDFFSDIGIAIF). The Extracellular segment spans residues 67–77 (HFWAGRHLSGA). Residues 78 to 98 (LVLTFALIPSVIINIISMVWM) traverse the membrane as a helical segment. Topologically, residues 99-123 (LDDEMHWKRRAHPRRTGTFELNQKR) are cytoplasmic. The helical transmembrane segment at 124–144 (FISLGKMITLCIFQMGPLFWY) threads the bilayer. The Extracellular portion of the chain corresponds to 145-219 (YKALYYGWMF…YYISGKYPYW (75 aa)). A helical transmembrane segment spans residues 220–240 (LYFQAASLTLSIISISWSVVV). The Cytoplasmic portion of the chain corresponds to 241–274 (QNRSLRMTRDDKVNIWPHEAVLQFCWRFLTILAR). A helical membrane pass occupies residues 275-295 (IITLVAFVLLFGIYVVFLIFG). The Extracellular portion of the chain corresponds to 296–320 (HLIVTLVHVIFLQALHIEACTHIEK). The chain crosses the membrane as a helical span at residues 321-341 (LLLLINAMIHLFTPFNMAEGN). Residues 342-353 (TRYRYLVAYTVE) are Cytoplasmic-facing. The chain crosses the membrane as a helical span at residues 354–374 (FIEMMIIFLLLPTPLDAFPLI). The Extracellular portion of the chain corresponds to 375-378 (EKIR). A helical membrane pass occupies residues 379 to 399 (IGVPATFFIGIFIMLIYYKFF). Residues 400–460 (HPNRRQDLEA…SLLEEDECHN (61 aa)) are Cytoplasmic-facing.

Belongs to the XK family. Cleavage by ced-3 activates ced-8 function in promoting phosphatidylserine exposure at the surface of apoptotic cells.

Its subcellular location is the cell membrane. In terms of biological role, acts downstream of ced-9 and caspase ced-3 to promote phosphatidylserine exposure on apoptotic cell surface, possibly by mediating phospholipid scrambling. Phosphatidylserine is a specific marker only present at the surface of apoptotic cells and acts as a specific signal for engulfment. Regulates apoptosis kinetics during embryonic development. Not required for engulfment of germ cell corpses. This is Cell death abnormality protein 8 from Caenorhabditis briggsae.